A 480-amino-acid polypeptide reads, in one-letter code: MPIFVNTVYCKNILALSMTKKFKTIIDAIGGNIIVNSTILKKLSPYFRTHLRQKYTKNKDPVTWVCLDLDIHSLTSIVIYSYTGKVYIDSHNVVNLLRASILTSVEFIIYTCINFILRDFRKEYCVECYMMGIEYGLSNLLCHTKNFIAKHFLELEDDIIDNFDYLSMKLILESDELNVPDEDYVVDFVIKWYIKRRNKLGNLLLLIKNVIRSNYLSPRGINNVKWILDCTKIFHCDKQPRKSYKYPFIEYPMNMDQIIDIFHMCTSTHVGEVVYLIGGWMNNEIHNNAIAVNYISNNWIPIPPMNSPRLYASGIPANNKLYVVGGLPNPTSVERWFHGDAAWVNMPSLLKPRCNPAVASINNVIYVMGGHSETDTTTEYLLPNHDQWQFGPSTYYPHYKSCALVFGRRLFLVGRNAEFYCESSNTWTLIDDPIYPRDNPELIIVDNKLLLIGGFYRESYIDTIEVYNHHTYSWNIWDGK.

A BTB domain is found at 10–90; that stretch reads CKNILALSMT…SYTGKVYIDS (81 aa). Positions 125–223 constitute a BACK domain; that stretch reads CVECYMMGIE…NYLSPRGINN (99 aa). Kelch repeat units follow at residues 273–319, 320–363, 365–408, 410–447, and 448–480; these read VVYL…PANN, KLYV…SINN, IYVM…VFGR, LFLVGRNAEFYCESSNTWTLIDDPIYPRDNPELIIVDN, and KLLLIGGFYRESYIDTIEVYNHHTYSWNIWDGK.

This sequence belongs to the orthopoxvirus OPG047 family.

Might have a role in the suppression of host immune response. This is Immune evasion protein OPG047 (OPG047) from Vaccinia virus (strain Western Reserve) (VACV).